We begin with the raw amino-acid sequence, 341 residues long: Heat-inducible transcription repressor HrcA (341 aa).

It belongs to the HrcA family.

Negative regulator of class I heat shock genes (grpE-dnaK-dnaJ and groELS operons). Prevents heat-shock induction of these operons. In Leptothrix cholodnii (strain ATCC 51168 / LMG 8142 / SP-6) (Leptothrix discophora (strain SP-6)), this protein is Heat-inducible transcription repressor HrcA.